The following is a 670-amino-acid chain: Solute carrier organic anion transporter family member 1A6 (670 aa).

Over 1-20 (MGEPGKRVGIHRVRCFAKIK) the chain is Cytoplasmic. Residues 21–40 (VFLLALIWAYISKILSGVYM) form a helical membrane-spanning segment. Over 41–59 (STMLTQLERQFNISTSIVG) the chain is Extracellular. The N-linked (GlcNAc...) asparagine glycan is linked to Asn52. The helical transmembrane segment at 60-80 (LINGSFEMGNLLVIVFVSYFG) threads the bilayer. Over 81–86 (TKLHRP) the chain is Cytoplasmic. Residues 87-111 (IMIGVGCAVMGLGCFIISLPHFLMG) form a helical membrane-spanning segment. Over 112 to 155 (RYEYETTISPTSNLSSNSFLCVENRSQTLKPTQDPAECVKEIKS) the chain is Extracellular. Residues Asn124 and Asn135 are each glycosylated (N-linked (GlcNAc...) asparagine). The helical transmembrane segment at 156-184 (LMWIYVLVGNIIRGIGETPIMPLGISYIE) threads the bilayer. Residues 185–203 (DFAKSENSPLYIGILEVGK) are Cytoplasmic-facing. Residues 204 to 224 (MIGPILGYLMGPFCANIYVDT) traverse the membrane as a helical segment. The Extracellular portion of the chain corresponds to 225-242 (GSVNTDDLTITPTDTRWV). A helical transmembrane segment spans residues 243-267 (GAWWIGFLVCAGVNVLTSIPFFFFP). At 268–311 (KTLPKEGLQDNGDGTENAKEEKHRDKAKEENQGIIKEFFLMMKN) the chain is on the cytoplasmic side. A helical membrane pass occupies residues 312 to 333 (LFCNPIYMLCVLTSVLQVNGVA). Residues 334-353 (NIVIYKPKYLEHHFGISTAK) lie on the Extracellular side of the membrane. The helical transmembrane segment at 354-377 (AVFLIGLYTTPSVSAGYLISGFIM) threads the bilayer. The Cytoplasmic segment spans residues 378 to 381 (KKLK). The helical transmembrane segment at 382–405 (ITLKKAAIIALCLFMSECLLSLCN) threads the bilayer. Over 406–513 (FMLTCDTTPI…PDCANKLQYF (108 aa)) the chain is Extracellular. In terms of domain architecture, Kazal-like spans 433–488 (NKFLSDCNTRCNCLTKTWDPVCGNNGLAYMSPCLAGCEKSVGTGANMVFQNCSCIR). 3 cysteine pairs are disulfide-bonded: Cys439-Cys469, Cys445-Cys465, and Cys454-Cys486. N-linked (GlcNAc...) asparagine glycosylation is found at Asn483 and Asn492. Residues 514 to 536 (LIITVFCCFFYSLATIPGYMVFL) traverse the membrane as a helical segment. Residues 537–545 (RCMKSEEKS) lie on the Cytoplasmic side of the membrane. The helical transmembrane segment at 546–571 (LGIGLQAFFMRLFAGIPAPIYFGALI) threads the bilayer. Residues 572–605 (DRTCLHWGTLKCGEPGACRTYEVSSFRRLYLGLP) are Extracellular-facing. The chain crosses the membrane as a helical span at residues 606 to 623 (AALRGSIILPSFFILRLI). Topologically, residues 624–670 (RKLQIPGDTDSSEIELAETKPTEKESECTDMHKSSKVENDGELKTKL) are cytoplasmic. A Phosphothreonine modification is found at Thr632. The segment at 633-670 (DSSEIELAETKPTEKESECTDMHKSSKVENDGELKTKL) is disordered. Ser634 and Ser635 each carry phosphoserine. Residues 640-670 (AETKPTEKESECTDMHKSSKVENDGELKTKL) show a composition bias toward basic and acidic residues.

It belongs to the organo anion transporter (TC 2.A.60) family. In terms of tissue distribution, kidney specific.

The protein localises to the cell membrane. In terms of biological role, may mediate the Na(+)-independent transport of organic anions. This is Solute carrier organic anion transporter family member 1A6 (Slco1a6) from Mus musculus (Mouse).